The sequence spans 472 residues: Eukaryotic translation initiation factor 2 subunit 3, Y-linked (472 aa).

Ala2 is subject to N-acetylalanine. Ser16 is subject to Phosphoserine. Residues 39-247 (QATINIGTIG…YIVKKIPVPL (209 aa)) enclose the tr-type G domain. The segment at 48–55 (GHVAHGKS) is G1. Residue 51 to 56 (AHGKST) coordinates GTP. Residues 76–80 (NITIK) are G2. Residues 134-137 (DCPG) form a G3 region. Residues 190–193 (NKID) and 225–227 (SAQ) each bind GTP. The tract at residues 190-193 (NKID) is G4. The G5 stretch occupies residues 225 to 227 (SAQ).

This sequence belongs to the TRAFAC class translation factor GTPase superfamily. Classic translation factor GTPase family. EIF2G subfamily. In terms of assembly, eIF2 is a heterotrimer composed of an alpha (EIF2S1), a beta (EIF2S2) and a gamma (Eif2s3x and Eif2s3y) chain. eIF2 is member of the 43S pre-initiation complex (43S PIC). As to expression, widely expressed in males.

It catalyses the reaction GTP + H2O = GDP + phosphate + H(+). In terms of biological role, member of the eIF2 complex that functions in the early steps of protein synthesis by forming a ternary complex with GTP and initiator tRNA. This complex binds to a 40S ribosomal subunit, followed by mRNA binding to form the 43S pre-initiation complex (43S PIC). Junction of the 60S ribosomal subunit to form the 80S initiation complex is preceded by hydrolysis of the GTP bound to eIF2 and release of an eIF2-GDP binary complex. In order for eIF2 to recycle and catalyze another round of initiation, the GDP bound to eIF2 must exchange with GTP by way of a reaction catalyzed by eIF-2B. Along with its paralog on chromosome X, may contribute to spermatogenesis up to the round spermatid stage. The sequence is that of Eukaryotic translation initiation factor 2 subunit 3, Y-linked (Eif2s3y) from Rattus norvegicus (Rat).